A 194-amino-acid chain; its full sequence is Pyridoxine/pyridoxamine 5'-phosphate oxidase (194 aa).

FMN contacts are provided by residues Arg42 to Lys47, Phe57 to Thr58, Arg63, Lys64, and Gln86. Substrate is bound at residue Lys47. Substrate is bound by residues Tyr104, Arg108, and Ser112. FMN-binding positions include Gln121–Ser122 and Trp166. Arg172–His174 is a substrate binding site. Arg176 contributes to the FMN binding site.

The protein belongs to the pyridoxamine 5'-phosphate oxidase family. As to quaternary structure, homodimer. FMN serves as cofactor.

The catalysed reaction is pyridoxamine 5'-phosphate + O2 + H2O = pyridoxal 5'-phosphate + H2O2 + NH4(+). The enzyme catalyses pyridoxine 5'-phosphate + O2 = pyridoxal 5'-phosphate + H2O2. The protein operates within cofactor metabolism; pyridoxal 5'-phosphate salvage; pyridoxal 5'-phosphate from pyridoxamine 5'-phosphate: step 1/1. Its pathway is cofactor metabolism; pyridoxal 5'-phosphate salvage; pyridoxal 5'-phosphate from pyridoxine 5'-phosphate: step 1/1. Functionally, catalyzes the oxidation of either pyridoxine 5'-phosphate (PNP) or pyridoxamine 5'-phosphate (PMP) into pyridoxal 5'-phosphate (PLP). In Ehrlichia ruminantium (strain Welgevonden), this protein is Pyridoxine/pyridoxamine 5'-phosphate oxidase.